The sequence spans 106 residues: Iron-sulfur cluster assembly protein CyaY (106 aa).

Belongs to the frataxin family.

Its function is as follows. Involved in iron-sulfur (Fe-S) cluster assembly. May act as a regulator of Fe-S biogenesis. The sequence is that of Iron-sulfur cluster assembly protein CyaY from Escherichia coli O9:H4 (strain HS).